We begin with the raw amino-acid sequence, 769 residues long: Integrin beta-2 (769 aa).

The first 22 residues, 1-22 (MLCRCSPLLLLVGLLTLRSALS), serve as a signal peptide directing secretion. A Pyrrolidone carboxylic acid modification is found at Gln23. Topologically, residues 23 to 700 (QECAKYKVST…ETRECVKGPN (678 aa)) are extracellular. Residues 24-74 (ECAKYKVSTCRDCIESGPGCAWCQKLNFSGQGEPDSVRCDTREQLLAKGCV) enclose the PSI domain. Disulfide bonds link Cys25/Cys43, Cys33/Cys447, Cys36/Cys62, Cys46/Cys73, Cys191/Cys198, Cys246/Cys286, Cys386/Cys400, Cys420/Cys445, Cys449/Cys467, Cys459/Cys470, Cys472/Cys481, Cys483/Cys514, Cys497/Cys512, Cys506/Cys517, Cys519/Cys534, Cys536/Cys559, Cys541/Cys557, Cys549/Cys562, Cys564/Cys573, Cys575/Cys598, Cys582/Cys596, Cys590/Cys601, Cys603/Cys612, Cys615/Cys618, Cys622/Cys662, Cys628/Cys647, Cys631/Cys643, and Cys670/Cys695. N-linked (GlcNAc...) asparagine glycosylation is found at Asn50 and Asn116. A VWFA domain is found at 124-363 (GYPIDLYYLM…ELIKNAYNKL (240 aa)). The Mg(2+) site is built by Ser136 and Ser138. Residues Ser138, Asp141, Asp142, and Asp173 each contribute to the Ca(2+) site. Positions 229, 231, 233, and 234 each coordinate Ca(2+). Position 234 (Glu234) interacts with Mg(2+). The N-linked (GlcNAc...) asparagine glycan is linked to Asn254. Asp264 and Glu347 together coordinate Ca(2+). A Cell attachment site motif is present at residues 397-399 (RGD). I-EGF domains follow at residues 449 to 482 (CGDS…KHCE), 483 to 535 (CQTQ…QFCE), 536 to 574 (CDNM…SACQ), and 575 to 613 (CLKS…PLCT). Asn501 is a glycosylation site (N-linked (GlcNAc...) asparagine). Residue Asn642 is glycosylated (N-linked (GlcNAc...) asparagine). A helical membrane pass occupies residues 701-723 (IAAIVGGTVGGVVLVGIFLLVIW). The Cytoplasmic portion of the chain corresponds to 724–769 (KVLTHLSDLREYKRFEKEKLKSQWNNDNPLFKSATTTVMNPKFAER). Ser745 and Ser756 each carry phosphoserine. 2 positions are modified to phosphothreonine: Thr758 and Thr760.

This sequence belongs to the integrin beta chain family. Heterodimer of an alpha and a beta subunit. The ITGB2 beta subunit associates with the ITGAL, ITGAM, ITGAX or ITGAD alpha subunits. Found in a complex with CD177 and ITGAM/CD11b. Interacts with FGR. Interacts with COPS5 and RANBP9. Interacts with FLNA (via filamin repeats 4, 9, 12, 17, 19, 21, and 23). Interacts with THBD. In terms of processing, both Ser-745 and Ser-756 become phosphorylated when T-cells are exposed to phorbol esters. Phosphorylation on Thr-758 (but not on Ser-756) allows interaction with 14-3-3 proteins.

Its subcellular location is the cell membrane. The protein resides in the membrane raft. In terms of biological role, integrin ITGAL/ITGB2 is a receptor for ICAM1, ICAM2, ICAM3 and ICAM4. Integrin ITGAL/ITGB2 is also a receptor for the secreted form of ubiquitin-like protein ISG15; the interaction is mediated by ITGAL. Integrins ITGAM/ITGB2 and ITGAX/ITGB2 are receptors for the iC3b fragment of the third complement component and for fibrinogen. Integrin ITGAX/ITGB2 recognizes the sequence G-P-R in fibrinogen alpha-chain. Integrin ITGAM/ITGB2 recognizes P1 and P2 peptides of fibrinogen gamma chain. Integrin ITGAM/ITGB2 is also a receptor for factor X. Integrin ITGAD/ITGB2 is a receptor for ICAM3 and VCAM1. Contributes to natural killer cell cytotoxicity. Involved in leukocyte adhesion and transmigration of leukocytes including T-cells and neutrophils. Triggers neutrophil transmigration during lung injury through PTK2B/PYK2-mediated activation. Integrin alpha-L/beta-2 in association with ICAM3, contributes to apoptotic neutrophil phagocytosis by macrophages. The protein is Integrin beta-2 (ITGB2) of Sus scrofa (Pig).